A 301-amino-acid chain; its full sequence is D-alanine--D-alanine ligase (301 aa).

In terms of domain architecture, ATP-grasp spans 99-293 (KRILAFGNVR…FEELLDTIIE (195 aa)). Position 126 to 181 (126 to 181 (IENLGYPVFIKPNNGGSSVATTLVESKEAVKDAVLEALKYDTEVMIEEYIKGDEIT)) interacts with ATP. Asp248, Glu260, and Asn262 together coordinate Mg(2+).

Belongs to the D-alanine--D-alanine ligase family. Mg(2+) is required as a cofactor. Mn(2+) serves as cofactor.

Its subcellular location is the cytoplasm. The enzyme catalyses 2 D-alanine + ATP = D-alanyl-D-alanine + ADP + phosphate + H(+). The protein operates within cell wall biogenesis; peptidoglycan biosynthesis. Cell wall formation. This Clostridium perfringens (strain SM101 / Type A) protein is D-alanine--D-alanine ligase.